We begin with the raw amino-acid sequence, 75 residues long: U6-lycotoxin-Ls1a (75 aa).

An N-terminal signal peptide occupies residues 1–21 (MKLLLFTALVLVVISLIEVEA). Residues 22–25 (ENER) constitute a propeptide that is removed on maturation.

It belongs to the neurotoxin 19 (CSTX) family. 06 (U6-Lctx) subfamily. Post-translationally, contains 4 disulfide bonds. As to expression, expressed by the venom gland.

It localises to the secreted. This is U6-lycotoxin-Ls1a from Lycosa singoriensis (Wolf spider).